Here is a 265-residue protein sequence, read N- to C-terminus: Probable cell division protein kinase ECU08_0230 (265 aa).

A Protein kinase domain is found at Tyr4–Gly263. ATP is bound by residues Ile10–Val18 and Lys33. Asp121 functions as the Proton acceptor in the catalytic mechanism.

It belongs to the protein kinase superfamily. CMGC Ser/Thr protein kinase family. CDC2/CDKX subfamily.

It is found in the nucleus. It catalyses the reaction L-seryl-[protein] + ATP = O-phospho-L-seryl-[protein] + ADP + H(+). It carries out the reaction L-threonyl-[protein] + ATP = O-phospho-L-threonyl-[protein] + ADP + H(+). May play a role in the control of the eukaryotic cell cycle. This chain is Probable cell division protein kinase ECU08_0230, found in Encephalitozoon cuniculi (strain GB-M1) (Microsporidian parasite).